The chain runs to 46 residues: Photosystem II reaction center protein K (46 aa).

A propeptide spanning residues 1-9 (MLTLLNTFA) is cleaved from the precursor. Residues 25 to 45 (LPLIPLFFFLLVFVWQAAVGF) form a helical membrane-spanning segment.

Belongs to the PsbK family. In terms of assembly, PSII is composed of 1 copy each of membrane proteins PsbA, PsbB, PsbC, PsbD, PsbE, PsbF, PsbH, PsbI, PsbJ, PsbK, PsbL, PsbM, PsbT, PsbX, PsbY, Psb30/Ycf12, peripheral proteins PsbO, CyanoQ (PsbQ), PsbU, PsbV and a large number of cofactors. It forms dimeric complexes.

The protein resides in the cellular thylakoid membrane. In terms of biological role, one of the components of the core complex of photosystem II (PSII). PSII is a light-driven water:plastoquinone oxidoreductase that uses light energy to abstract electrons from H(2)O, generating O(2) and a proton gradient subsequently used for ATP formation. It consists of a core antenna complex that captures photons, and an electron transfer chain that converts photonic excitation into a charge separation. The polypeptide is Photosystem II reaction center protein K (Prochlorococcus marinus (strain MIT 9515)).